The primary structure comprises 745 residues: Cellulose synthase 1 catalytic subunit [UDP-forming] (745 aa).

3 helical membrane passes run 29-49 (YVVG…TLSL), 106-126 (GILG…LFLS), and 153-173 (IFIP…LGAL). Positions 147-240 (EWPTVDIFIP…HILILDCDHI (94 aa)) are catalytic subdomain A. D189 is an active-site residue. Substrate is bound by residues D236 and D238. Positions 317–377 (KAIEEIGGFA…GQRMRWARGM (61 aa)) are catalytic subdomain B. Residue D333 is part of the active site. 6 consecutive transmembrane segments (helical) span residues 407–427 (FFFA…LFFS), 430–450 (IIAA…FHSI), 468–488 (VYET…MLFP), 515–535 (NIIF…ALIF), 547–567 (ALNC…ISVG), and 649–669 (AVFT…RFVF). Residues 572–670 (QLRQSHRIEA…EAAVVRFVFG (99 aa)) form the PilZ domain. A compositionally biased stretch (basic residues) spans 708–717 (IAHSRPKKKP). A disordered region spans residues 708 to 745 (IAHSRPKKKPIALPVERREPTTSQGGQKQEGKISRAAS). Residues 736-745 (QEGKISRAAS) are compositionally biased toward basic and acidic residues.

This sequence belongs to the glycosyltransferase 2 family. Requires Mg(2+) as cofactor.

The protein localises to the cell inner membrane. The catalysed reaction is [(1-&gt;4)-beta-D-glucosyl](n) + UDP-alpha-D-glucose = [(1-&gt;4)-beta-D-glucosyl](n+1) + UDP + H(+). Its pathway is glycan metabolism; bacterial cellulose biosynthesis. Activated by bis-(3'-5') cyclic diguanylic acid (c-di-GMP). Functionally, catalytic subunit of cellulose synthase. It polymerizes uridine 5'-diphosphate glucose to cellulose. The thick cellulosic mats generated by this enzyme probably provide a specialized protective environment to the bacterium. The chain is Cellulose synthase 1 catalytic subunit [UDP-forming] (bcsAI) from Komagataeibacter xylinus (Gluconacetobacter xylinus).